A 210-amino-acid polypeptide reads, in one-letter code: Outer-membrane lipoprotein LolB (210 aa).

Residues 1-19 (MNHLKSFFTALVAGFILTA) form the signal peptide. C20 is lipidated: N-palmitoyl cysteine. C20 is lipidated: S-diacylglycerol cysteine.

The protein belongs to the LolB family. As to quaternary structure, monomer.

It localises to the cell outer membrane. Plays a critical role in the incorporation of lipoproteins in the outer membrane after they are released by the LolA protein. The chain is Outer-membrane lipoprotein LolB from Mannheimia succiniciproducens (strain KCTC 0769BP / MBEL55E).